The chain runs to 938 residues: Isoleucine--tRNA ligase (938 aa).

Residues 58–68 (PYANGSIHIGH) carry the 'HIGH' region motif. At lysine 183 the chain carries N6-acetyllysine. Glutamate 561 serves as a coordination point for L-isoleucyl-5'-AMP. Positions 602 to 606 (KMSKS) match the 'KMSKS' region motif. ATP is bound at residue lysine 605. Zn(2+) contacts are provided by cysteine 901, cysteine 904, cysteine 921, and cysteine 924.

This sequence belongs to the class-I aminoacyl-tRNA synthetase family. IleS type 1 subfamily. In terms of assembly, monomer. The cofactor is Zn(2+).

It localises to the cytoplasm. It carries out the reaction tRNA(Ile) + L-isoleucine + ATP = L-isoleucyl-tRNA(Ile) + AMP + diphosphate. Functionally, catalyzes the attachment of isoleucine to tRNA(Ile). As IleRS can inadvertently accommodate and process structurally similar amino acids such as valine, to avoid such errors it has two additional distinct tRNA(Ile)-dependent editing activities. One activity is designated as 'pretransfer' editing and involves the hydrolysis of activated Val-AMP. The other activity is designated 'posttransfer' editing and involves deacylation of mischarged Val-tRNA(Ile). The sequence is that of Isoleucine--tRNA ligase from Escherichia coli O6:H1 (strain CFT073 / ATCC 700928 / UPEC).